Consider the following 215-residue polypeptide: Peroxiredoxin-5, mitochondrial (215 aa).

Residues 1-53 (MGLAGVCVLRRSAGYILGGAARQSVAATAAARRRSEGGWASGGVRSFSRAAAA) constitute a mitochondrion transit peptide. A Thioredoxin domain is found at 57–215 (IKVGDAIPAV…SLAPSIISQL (159 aa)). K76 bears the N6-acetyllysine mark. An N6-acetyllysine; alternate modification is found at K84. Residue K84 is modified to N6-succinyllysine; alternate. C101 acts as the Cysteine sulfenic acid (-SOH) intermediate in catalysis. C101 carries S-palmitoyl cysteine lipidation. A disulfide bridge connects residues C101 and C205. An N6-succinyllysine modification is found at K117. Phosphoserine is present on residues S172 and S183. The Microbody targeting signal motif lies at 213-215 (SQL).

Belongs to the peroxiredoxin family. Prx5 subfamily. Monomer. Post-translationally, S-palmitoylated. Palmitoylation occurs on the active site, inhibiting its reactivity; therefore PRDX5 palmitoylation status determines its antioxidant capacity. S-palmitoylated. Depalmitoylated by ABHD10.

Its subcellular location is the mitochondrion. It localises to the cytoplasm. It is found in the peroxisome matrix. It catalyses the reaction a hydroperoxide + [thioredoxin]-dithiol = an alcohol + [thioredoxin]-disulfide + H2O. Its function is as follows. Thiol-specific peroxidase that catalyzes the reduction of hydrogen peroxide and organic hydroperoxides to water and alcohols, respectively. Plays a role in cell protection against oxidative stress by detoxifying peroxides and as sensor of hydrogen peroxide-mediated signaling events. In Chlorocebus aethiops (Green monkey), this protein is Peroxiredoxin-5, mitochondrial (PRDX5).